We begin with the raw amino-acid sequence, 103 residues long: Small ribosomal subunit protein uS10 (103 aa).

This sequence belongs to the universal ribosomal protein uS10 family. As to quaternary structure, part of the 30S ribosomal subunit.

Involved in the binding of tRNA to the ribosomes. The protein is Small ribosomal subunit protein uS10 of Bordetella petrii (strain ATCC BAA-461 / DSM 12804 / CCUG 43448).